The chain runs to 1598 residues: Pentafunctional AROM polypeptide (1598 aa).

The tract at residues 1–384 (MGVPTKISIL…YEPRACTVSN (384 aa)) is 3-dehydroquinate synthase. NAD(+) is bound by residues 44–46 (DTN), 81–84 (ESSK), 114–116 (GGV), and D119. Residue R130 coordinates 7-phospho-2-dehydro-3-deoxy-D-arabino-heptonate. An NAD(+)-binding site is contributed by 139-140 (TT). Residues D146 and K152 each contribute to the 7-phospho-2-dehydro-3-deoxy-D-arabino-heptonate site. NAD(+) is bound at residue K161. Residue N162 coordinates 7-phospho-2-dehydro-3-deoxy-D-arabino-heptonate. Residues 179-182 (FLNT) and N190 contribute to the NAD(+) site. Residue E194 coordinates Zn(2+). 7-phospho-2-dehydro-3-deoxy-D-arabino-heptonate is bound by residues 194-197 (EVIK) and K250. The active-site Proton acceptor; for 3-dehydroquinate synthase activity is the E260. Residues 264–268 (RNLLN) and H271 contribute to the 7-phospho-2-dehydro-3-deoxy-D-arabino-heptonate site. H271 contributes to the Zn(2+) binding site. H275 (proton acceptor; for 3-dehydroquinate synthase activity) is an active-site residue. H287 and K356 together coordinate 7-phospho-2-dehydro-3-deoxy-D-arabino-heptonate. H287 is a binding site for Zn(2+). Residues 397–842 (VYPGFPKSLN…WDTLAQTFKV (446 aa)) form an EPSP synthase region. C824 (for EPSP synthase activity) is an active-site residue. The interval 867 to 1059 (AASIFIIGMR…RRKENTFFVS (193 aa)) is shikimate kinase. 874–881 (GMRGAGKT) contacts ATP. Positions 1060 to 1280 (LTFPDLTPAS…AAPGQLSARE (221 aa)) are 3-dehydroquinase. H1183 serves as the catalytic Proton acceptor; for 3-dehydroquinate dehydratase activity. The Schiff-base intermediate with substrate; for 3-dehydroquinate dehydratase activity role is filled by K1211. Positions 1293-1598 (AKKFAVIGKP…GVSSSDDIIS (306 aa)) are shikimate dehydrogenase.

This sequence in the N-terminal section; belongs to the sugar phosphate cyclases superfamily. Dehydroquinate synthase family. The protein in the 2nd section; belongs to the EPSP synthase family. It in the 3rd section; belongs to the shikimate kinase family. In the 4th section; belongs to the type-I 3-dehydroquinase family. This sequence in the C-terminal section; belongs to the shikimate dehydrogenase family. As to quaternary structure, homodimer. Zn(2+) serves as cofactor.

The protein localises to the cytoplasm. The catalysed reaction is 7-phospho-2-dehydro-3-deoxy-D-arabino-heptonate = 3-dehydroquinate + phosphate. It carries out the reaction 3-dehydroquinate = 3-dehydroshikimate + H2O. The enzyme catalyses shikimate + NADP(+) = 3-dehydroshikimate + NADPH + H(+). It catalyses the reaction shikimate + ATP = 3-phosphoshikimate + ADP + H(+). The catalysed reaction is 3-phosphoshikimate + phosphoenolpyruvate = 5-O-(1-carboxyvinyl)-3-phosphoshikimate + phosphate. The protein operates within metabolic intermediate biosynthesis; chorismate biosynthesis; chorismate from D-erythrose 4-phosphate and phosphoenolpyruvate: step 2/7. It functions in the pathway metabolic intermediate biosynthesis; chorismate biosynthesis; chorismate from D-erythrose 4-phosphate and phosphoenolpyruvate: step 3/7. It participates in metabolic intermediate biosynthesis; chorismate biosynthesis; chorismate from D-erythrose 4-phosphate and phosphoenolpyruvate: step 4/7. Its pathway is metabolic intermediate biosynthesis; chorismate biosynthesis; chorismate from D-erythrose 4-phosphate and phosphoenolpyruvate: step 5/7. The protein operates within metabolic intermediate biosynthesis; chorismate biosynthesis; chorismate from D-erythrose 4-phosphate and phosphoenolpyruvate: step 6/7. The AROM polypeptide catalyzes 5 consecutive enzymatic reactions in prechorismate polyaromatic amino acid biosynthesis. The chain is Pentafunctional AROM polypeptide from Paracoccidioides lutzii (strain ATCC MYA-826 / Pb01) (Paracoccidioides brasiliensis).